The chain runs to 444 residues: Phosphoglucosamine mutase (444 aa).

S102 acts as the Phosphoserine intermediate in catalysis. 4 residues coordinate Mg(2+): S102, D241, D243, and D245. The residue at position 102 (S102) is a Phosphoserine.

This sequence belongs to the phosphohexose mutase family. Mg(2+) serves as cofactor. Activated by phosphorylation.

It carries out the reaction alpha-D-glucosamine 1-phosphate = D-glucosamine 6-phosphate. Functionally, catalyzes the conversion of glucosamine-6-phosphate to glucosamine-1-phosphate. The chain is Phosphoglucosamine mutase from Histophilus somni (strain 2336) (Haemophilus somnus).